The chain runs to 102 residues: Small ribosomal subunit protein bS6 (102 aa).

This sequence belongs to the bacterial ribosomal protein bS6 family.

Its function is as follows. Binds together with bS18 to 16S ribosomal RNA. The protein is Small ribosomal subunit protein bS6 of Desulfovibrio desulfuricans (strain ATCC 27774 / DSM 6949 / MB).